We begin with the raw amino-acid sequence, 151 residues long: MKCPFCGYSESKVVDSRSTEDNMAIRRRRECLECSKRYTTYEKVEDIPILVIKKDSSREFFDKSKVINGLIKSCEKRPVSRQQIEDIASDVEKSISNQMVTEVKSDAIGEMVMEKLKEIDEIAYVRFASVYRQFKDINTFMEEILNLVNKK.

A zinc finger spans residues 3 to 34 (CPFCGYSESKVVDSRSTEDNMAIRRRRECLEC). Residues 49–139 (ILVIKKDSSR…VYRQFKDINT (91 aa)) form the ATP-cone domain.

Belongs to the NrdR family. The cofactor is Zn(2+).

Negatively regulates transcription of bacterial ribonucleotide reductase nrd genes and operons by binding to NrdR-boxes. This is Transcriptional repressor NrdR from Clostridium acetobutylicum (strain ATCC 824 / DSM 792 / JCM 1419 / IAM 19013 / LMG 5710 / NBRC 13948 / NRRL B-527 / VKM B-1787 / 2291 / W).